The chain runs to 608 residues: Albumin (608 aa).

The first 18 residues, 1 to 18, serve as a signal peptide directing secretion; it reads MKWVTFISLLLLFSSAYS. Positions 19 to 24 are excised as a propeptide; that stretch reads RGVTRR. Albumin domains follow at residues 19 to 210, 211 to 403, and 404 to 601; these read RGVT…DALR, EKVL…EFKP, and LVEE…KLVA. A Cu cation-binding site is contributed by H27. Phosphoserine is present on S29. The Ca(2+) site is built by E30 and D37. A disulfide bond links C77 and C86. S82 and S89 each carry phosphoserine. Residue H91 coordinates Zn(2+). 6 disulfide bridges follow: C99–C115, C114–C125, C148–C193, C192–C201, C224–C270, and C269–C277. An N6-succinyllysine modification is found at K229. Ca(2+) is bound at residue E268. H271 and D273 together coordinate Zn(2+). D273, E276, D279, and D283 together coordinate Ca(2+). Cystine bridges form between C289–C303, C302–C313, C340–C385, C384–C393, C416–C462, C461–C472, C485–C501, and C500–C511. S443 is subject to Phosphoserine. A phosphothreonine mark is found at T444 and T446. K460 bears the N6-succinyllysine mark. S513 carries the phosphoserine modification. Cystine bridges form between C538–C583 and C582–C591. K558 is subject to N6-methyllysine. T570 is subject to Phosphothreonine. At K588 the chain carries N6-succinyllysine.

This sequence belongs to the ALB/AFP/VDB family. Interacts with FCGRT; this interaction regulates ALB homeostasis. Interacts with TASOR. In plasma, occurs in a covalently-linked complex with chromophore-bound alpha-1-microglobulin; this interaction does not prevent fatty acid binding to ALB. In terms of processing, phosphorylated by FAM20C in the extracellular medium. Plasma.

The protein resides in the secreted. Its function is as follows. Binds water, Ca(2+), Na(+), K(+), fatty acids, hormones, bilirubin and drugs. Its main function is the regulation of the colloidal osmotic pressure of blood. Major zinc transporter in plasma, typically binds about 80% of all plasma zinc. Major calcium and magnesium transporter in plasma, binds approximately 45% of circulating calcium and magnesium in plasma. Potentially has more than two calcium-binding sites and might additionally bind calcium in a non-specific manner. The shared binding site between zinc and calcium at residue Asp-273 suggests a crosstalk between zinc and calcium transport in the blood. The rank order of affinity is zinc &gt; calcium &gt; magnesium. Binds to the bacterial siderophore enterobactin and inhibits enterobactin-mediated iron uptake of E.coli from ferric transferrin, and may thereby limit the utilization of iron and growth of enteric bacteria such as E.coli. Does not prevent iron uptake by the bacterial siderophore aerobactin. This Felis catus (Cat) protein is Albumin (ALB).